A 433-amino-acid chain; its full sequence is Divergent protein kinase domain 2B (433 aa).

Residues 1 to 31 form the signal peptide; the sequence is MEPQLGPEAAALRPGWLALLLWVSALSCSFS. N-linked (GlcNAc...) asparagine glycosylation occurs at N100.

It belongs to the DIPK family.

It localises to the secreted. This Homo sapiens (Human) protein is Divergent protein kinase domain 2B.